Consider the following 72-residue polypeptide: UPF0270 protein plu0398 (72 aa).

This sequence belongs to the UPF0270 family.

The polypeptide is UPF0270 protein plu0398 (Photorhabdus laumondii subsp. laumondii (strain DSM 15139 / CIP 105565 / TT01) (Photorhabdus luminescens subsp. laumondii)).